The following is a 321-amino-acid chain: Probable arabinan endo-1,5-alpha-L-arabinosidase A (321 aa).

The first 19 residues, 1-19, serve as a signal peptide directing secretion; it reads MSASVFVVVASCLAALAHG. The active-site Proton acceptor is the Asp-34. The Proton donor role is filled by Glu-200.

The protein belongs to the glycosyl hydrolase 43 family.

Its subcellular location is the secreted. It catalyses the reaction Endohydrolysis of (1-&gt;5)-alpha-arabinofuranosidic linkages in (1-&gt;5)-arabinans.. The protein operates within glycan metabolism; L-arabinan degradation. Endo-1,5-alpha-L-arabinanase involved in degradation of pectin. Its preferred substrate is linear 1,5-alpha-L-arabinan. The sequence is that of Probable arabinan endo-1,5-alpha-L-arabinosidase A (abnA) from Aspergillus fumigatus (strain ATCC MYA-4609 / CBS 101355 / FGSC A1100 / Af293) (Neosartorya fumigata).